The chain runs to 599 residues: Nucleoporin p58/p45 (599 aa).

5 tandem repeats follow at residues Phe-7–Gly-8, Phe-30–Gly-31, Phe-44–Gly-45, Phe-63–Gly-64, and Phe-68–Gly-69. The segment at Phe-7 to Gly-579 is 14 X 2 AA repeats of F-G. The tract at residues Asn-213 to Leu-247 is disordered. Over residues Ser-225–Asn-246 the composition is skewed to basic and acidic residues. 2 coiled-coil regions span residues Glu-256–Ser-276 and Glu-314–Thr-381. Phosphothreonine is present on Thr-331. A run of 9 repeats spans residues Phe-488–Gly-489, Phe-492–Gly-493, Phe-513–Gly-514, Phe-519–Gly-520, Phe-529–Gly-530, Phe-531–Gly-532, Phe-545–Gly-546, Phe-568–Gly-569, and Phe-578–Gly-579. The tract at residues Gly-579–Arg-599 is disordered.

Belongs to the NUP58 family. As to quaternary structure, component of the p62 complex, a complex at least composed of NUP62, NUP54, and NUP58. Interacts with NUTF2. Interacts with SRP1-alpha and Importin p97 proteins when they are together, but not with SRP1-alpha protein alone. O-glycosylated.

It localises to the nucleus. The protein resides in the nuclear pore complex. It is found in the nucleus membrane. Functionally, component of the nuclear pore complex, a complex required for the trafficking across the nuclear membrane. In Homo sapiens (Human), this protein is Nucleoporin p58/p45.